The chain runs to 345 residues: Uroporphyrinogen decarboxylase (345 aa).

Substrate-binding positions include 27-31, phenylalanine 46, aspartate 76, tyrosine 152, serine 207, and histidine 321; that span reads RQAGR.

Belongs to the uroporphyrinogen decarboxylase family. As to quaternary structure, homodimer.

The protein localises to the cytoplasm. The enzyme catalyses uroporphyrinogen III + 4 H(+) = coproporphyrinogen III + 4 CO2. The protein operates within porphyrin-containing compound metabolism; protoporphyrin-IX biosynthesis; coproporphyrinogen-III from 5-aminolevulinate: step 4/4. Catalyzes the decarboxylation of four acetate groups of uroporphyrinogen-III to yield coproporphyrinogen-III. In Staphylococcus aureus (strain USA300 / TCH1516), this protein is Uroporphyrinogen decarboxylase.